A 78-amino-acid polypeptide reads, in one-letter code: Large ribosomal subunit protein bL28 (78 aa).

It belongs to the bacterial ribosomal protein bL28 family.

In Francisella tularensis subsp. holarctica (strain FTNF002-00 / FTA), this protein is Large ribosomal subunit protein bL28.